The following is a 235-amino-acid chain: Phosphatidylserine decarboxylase proenzyme (235 aa).

The active-site Schiff-base intermediate with substrate; via pyruvic acid is the Ser204. Ser204 bears the Pyruvic acid (Ser); by autocatalysis mark.

Belongs to the phosphatidylserine decarboxylase family. PSD-A subfamily. In terms of assembly, heterodimer of a large membrane-associated beta subunit and a small pyruvoyl-containing alpha subunit. The cofactor is pyruvate. In terms of processing, is synthesized initially as an inactive proenzyme. Formation of the active enzyme involves a self-maturation process in which the active site pyruvoyl group is generated from an internal serine residue via an autocatalytic post-translational modification. Two non-identical subunits are generated from the proenzyme in this reaction, and the pyruvate is formed at the N-terminus of the alpha chain, which is derived from the carboxyl end of the proenzyme. The post-translation cleavage follows an unusual pathway, termed non-hydrolytic serinolysis, in which the side chain hydroxyl group of the serine supplies its oxygen atom to form the C-terminus of the beta chain, while the remainder of the serine residue undergoes an oxidative deamination to produce ammonia and the pyruvoyl prosthetic group on the alpha chain.

It is found in the cell membrane. It catalyses the reaction a 1,2-diacyl-sn-glycero-3-phospho-L-serine + H(+) = a 1,2-diacyl-sn-glycero-3-phosphoethanolamine + CO2. It functions in the pathway phospholipid metabolism; phosphatidylethanolamine biosynthesis; phosphatidylethanolamine from CDP-diacylglycerol: step 2/2. Functionally, catalyzes the formation of phosphatidylethanolamine (PtdEtn) from phosphatidylserine (PtdSer). The chain is Phosphatidylserine decarboxylase proenzyme from Mycobacterium sp. (strain JLS).